The following is a 265-amino-acid chain: Indole-3-glycerol phosphate synthase (265 aa).

Belongs to the TrpC family.

It catalyses the reaction 1-(2-carboxyphenylamino)-1-deoxy-D-ribulose 5-phosphate + H(+) = (1S,2R)-1-C-(indol-3-yl)glycerol 3-phosphate + CO2 + H2O. The protein operates within amino-acid biosynthesis; L-tryptophan biosynthesis; L-tryptophan from chorismate: step 4/5. This is Indole-3-glycerol phosphate synthase from Desulforamulus reducens (strain ATCC BAA-1160 / DSM 100696 / MI-1) (Desulfotomaculum reducens).